The following is a 506-amino-acid chain: Glycerol kinase (506 aa).

Thr14 serves as a coordination point for ADP. 3 residues coordinate ATP: Thr14, Thr15, and Ser16. Sn-glycerol 3-phosphate is bound at residue Thr14. Arg18 lines the ADP pocket. Sn-glycerol 3-phosphate contacts are provided by Arg84, Glu85, and Tyr136. Arg84, Glu85, and Tyr136 together coordinate glycerol. His232 bears the Phosphohistidine; by HPr mark. Asp246 contacts sn-glycerol 3-phosphate. The glycerol site is built by Asp246 and Gln247. ADP is bound by residues Thr268 and Gly311. Residues Thr268, Gly311, Gln315, and Gly412 each contribute to the ATP site. The ADP site is built by Gly412 and Asn416.

Belongs to the FGGY kinase family. In terms of assembly, homotetramer and homodimer (in equilibrium). In terms of processing, the phosphoenolpyruvate-dependent sugar phosphotransferase system (PTS), including enzyme I, and histidine-containing protein (HPr) are required for the phosphorylation of His-232, which leads to the activation of the enzyme.

It catalyses the reaction glycerol + ATP = sn-glycerol 3-phosphate + ADP + H(+). The protein operates within polyol metabolism; glycerol degradation via glycerol kinase pathway; sn-glycerol 3-phosphate from glycerol: step 1/1. With respect to regulation, activated by phosphorylation and inhibited by fructose 1,6-bisphosphate (FBP). Functionally, key enzyme in the regulation of glycerol uptake and metabolism. Catalyzes the phosphorylation of glycerol to yield sn-glycerol 3-phosphate. The protein is Glycerol kinase of Enterococcus casseliflavus (Enterococcus flavescens).